A 100-amino-acid polypeptide reads, in one-letter code: Aspartyl/glutamyl-tRNA(Asn/Gln) amidotransferase subunit C (100 aa).

The protein belongs to the GatC family. As to quaternary structure, heterotrimer of A, B and C subunits.

The enzyme catalyses L-glutamyl-tRNA(Gln) + L-glutamine + ATP + H2O = L-glutaminyl-tRNA(Gln) + L-glutamate + ADP + phosphate + H(+). The catalysed reaction is L-aspartyl-tRNA(Asn) + L-glutamine + ATP + H2O = L-asparaginyl-tRNA(Asn) + L-glutamate + ADP + phosphate + 2 H(+). Functionally, allows the formation of correctly charged Asn-tRNA(Asn) or Gln-tRNA(Gln) through the transamidation of misacylated Asp-tRNA(Asn) or Glu-tRNA(Gln) in organisms which lack either or both of asparaginyl-tRNA or glutaminyl-tRNA synthetases. The reaction takes place in the presence of glutamine and ATP through an activated phospho-Asp-tRNA(Asn) or phospho-Glu-tRNA(Gln). In Streptococcus equi subsp. equi (strain 4047), this protein is Aspartyl/glutamyl-tRNA(Asn/Gln) amidotransferase subunit C.